Here is a 285-residue protein sequence, read N- to C-terminus: Methylamine utilization protein MauF (285 aa).

A run of 7 helical transmembrane segments spans residues 39–59 (FIMMLTAVASGVFAGRVMHST), 60–80 (MSVEMALTGLFVVLAFVGGLL), 119–139 (YAIGAVVLGGALGGISWLLFA), 145–165 (YAVIGLATLAIGYGLHQFGFL), 188–208 (VIGLLYGFSLGMNYLTYVQTP), 212–232 (IVTGVALLSGGVKAGIAVIAV), and 265–285 (VEVDGFLLLAIASAALMLVML).

It localises to the cell membrane. It participates in one-carbon metabolism; methylamine degradation. In Methylophilus methylotrophus (Bacterium W3A1), this protein is Methylamine utilization protein MauF (mauF).